We begin with the raw amino-acid sequence, 442 residues long: Histidinol dehydrogenase (442 aa).

Residues 1–20 (MLNVTDLRGQTPSKSDIRRA) form a disordered region. NAD(+) is bound by residues Tyr-129, Gln-193, and Asn-218. 3 residues coordinate substrate: Thr-241, Gln-263, and His-266. Gln-263 and His-266 together coordinate Zn(2+). Residues Glu-332 and His-333 each act as proton acceptor in the active site. Positions 333, 366, 420, and 425 each coordinate substrate. Residue Asp-366 coordinates Zn(2+). A Zn(2+)-binding site is contributed by His-425.

The protein belongs to the histidinol dehydrogenase family. Requires Zn(2+) as cofactor.

The catalysed reaction is L-histidinol + 2 NAD(+) + H2O = L-histidine + 2 NADH + 3 H(+). The protein operates within amino-acid biosynthesis; L-histidine biosynthesis; L-histidine from 5-phospho-alpha-D-ribose 1-diphosphate: step 9/9. In terms of biological role, catalyzes the sequential NAD-dependent oxidations of L-histidinol to L-histidinaldehyde and then to L-histidine. The chain is Histidinol dehydrogenase from Corynebacterium glutamicum (strain ATCC 13032 / DSM 20300 / JCM 1318 / BCRC 11384 / CCUG 27702 / LMG 3730 / NBRC 12168 / NCIMB 10025 / NRRL B-2784 / 534).